Consider the following 903-residue polypeptide: MRQGAARGCRWFVVWALLGLTLGVLVASAAPSSPGTPGVAAATQAANGGPATPAPPAPGPAPTGDTKPKKNKKPKNPPPPRPAGDNATVAAGHATLREHLRDIKAENTDANFYVCPPPTGATVVQFEQPRRCPTRPEGQNYTEGIAVVFKENIAPYKFKATMYYKDVTVSQVWFGHRYSQFMGIFEDRAPVPFEEVIDKINAKGVCRSTAKYVRNNLETTAFHRDDHETDMELKPANAATRTSRGWHTTDLKYNPSRVEAFHRYGTTVNCIVEEVDARSVYPYDEFVLATGDFVYMSPFYGYREGSHTEHTSYAADRFKQVDGFYARDLTTKARATAPTTRNLLTTPKFTVAWDWVPKRPSVCTMTKWQEVDEMLRSEYGGSFRFSSDAISTTFTTNLTEYPLSRVDLGDCIGKDARDAMDRIFARRYNATHIKVGQPQYYLANGGFLIAYQPLLSNTLAELYVREHLREQSRKPPNPTPPPPGASANASVERIKTTSSIEFARLQFTYNHIQRHVNDMLGRVAIAWCELQNHELTLWNEARKLNPNAIASATVGRRVSARMLGDVMAVSTCVPVAADNVIVQNSMRISSRPGACYSRPLVSFRYEDQGPLVEGQLGENNELRLTRDAIEPCTVGHRRYFTFGGGYVYFEEYAYSHQLSRADITTVSTFIDLNITMLEDHEFVPLEVYTRHEIKDSGLLDYTEVQRRNQLHDLRFADIDTVIHADANAAMFAGLGAFFEGMGDLGRAVGKVVMGIVGGVVSAVSGVSSFMSNPFGALAVGLLVLAGLAAAFFAFRYVMRLQSNPMKALYPLTTKELKNPTNPDASGEGEEGGDFDEAKLAEAREMIRYMALVSAMERTEHKAKKKGTSALLSAKVTDMVMRKRRNTNYTQVPNKDGDADEDDL.

The N-terminal stretch at 1-29 (MRQGAARGCRWFVVWALLGLTLGVLVASA) is a signal peptide. Low complexity predominate over residues 30-51 (APSSPGTPGVAAATQAANGGPA). Residues 30-87 (APSSPGTPGVAAATQAANGGPATPAPPAPGPAPTGDTKPKKNKKPKNPPPPRPAGDNA) form a disordered region. Residues 30–773 (APSSPGTPGV…SGVSSFMSNP (744 aa)) lie on the Virion surface side of the membrane. Positions 52 to 61 (TPAPPAPGPA) are enriched in pro residues. N-linked (GlcNAc...) asparagine; by host glycans are attached at residues Asn86 and Asn140. 5 disulfide bridges follow: Cys115-Cys572, Cys132-Cys528, Cys206-Cys270, Cys363-Cys411, and Cys595-Cys632. Involved in fusion and/or binding to host membrane regions lie at residues 172–178 (VWFGHRY) and 257–264 (RVEAFHRY). N-linked (GlcNAc...) asparagine; by host glycosylation is found at Asn397 and Asn429. The disordered stretch occupies residues 469-491 (REQSRKPPNPTPPPPGASANASV). Positions 475–484 (PPNPTPPPPG) are enriched in pro residues. N-linked (GlcNAc...) asparagine; by host glycosylation occurs at Asn488. Residue Asn673 is glycosylated (N-linked (GlcNAc...) asparagine; by host). The tract at residues 718 to 771 (IDTVIHADANAAMFAGLGAFFEGMGDLGRAVGKVVMGIVGGVVSAVSGVSSFMS) is hydrophobic membrane proximal region. The chain crosses the membrane as a helical span at residues 774–794 (FGALAVGLLVLAGLAAAFFAF). At 795–903 (RYVMRLQSNP…KDGDADEDDL (109 aa)) the chain is on the intravirion side. The Golgi targeting signature appears at 848 to 851 (YMAL). The interval 882–903 (KRRNTNYTQVPNKDGDADEDDL) is disordered. The short motif at 888–891 (YTQV) is the Internalization motif element.

The protein belongs to the herpesviridae glycoprotein B family. Homotrimer; disulfide-linked. Interacts with host receptor MYH9/NMMHC-IIA. Interacts with host receptor MYH10/NMMHC-IIB. Interacts with the host coreceptor PILRA. Binds to heparan sulfate proteoglycans. Interacts with gH/gL heterodimer. Interacts with gD. The cytoplasmic tail is phosphorylated by the viral kinase US3. Phosphorylation may be linked to a down-regulation of gB expression on cell surface. In terms of processing, ubiquitinated.

The protein localises to the virion membrane. Its subcellular location is the host cell membrane. It localises to the host endosome membrane. The protein resides in the host Golgi apparatus membrane. In terms of biological role, envelope glycoprotein that forms spikes at the surface of virion envelope and binds to the host cell entry receptors MYH9/NMMHC-IIA and MYH10/NMMHC-IIB, promoting the virus entry into host cells. Essential for the initial attachment to heparan sulfate moieties of the host cell surface proteoglycans. Involved in fusion of viral and cellular membranes leading to virus entry into the host cell: following initial binding to its host cell entry receptors, membrane fusion is mediated by the fusion machinery composed at least of gB and the heterodimer gH/gL. May be involved in the fusion between the virion envelope and the outer nuclear membrane during virion egress. Also plays a role, together with gK, in virus-induced cell-to-cell fusion (syncytia formation). This Homo sapiens (Human) protein is Envelope glycoprotein B.